Here is a 542-residue protein sequence, read N- to C-terminus: Ribulokinase 2 (542 aa).

The protein belongs to the ribulokinase family.

The enzyme catalyses D-ribulose + ATP = D-ribulose 5-phosphate + ADP + H(+). It catalyses the reaction L-ribulose + ATP = L-ribulose 5-phosphate + ADP + H(+). Its pathway is carbohydrate degradation; L-arabinose degradation via L-ribulose; D-xylulose 5-phosphate from L-arabinose (bacterial route): step 2/3. The sequence is that of Ribulokinase 2 from Staphylococcus saprophyticus subsp. saprophyticus (strain ATCC 15305 / DSM 20229 / NCIMB 8711 / NCTC 7292 / S-41).